The chain runs to 968 residues: RNA polymerase-associated protein RapA (968 aa).

Residues aspartate 164–serine 334 enclose the Helicase ATP-binding domain. ATP is bound at residue aspartate 177 to threonine 184. Residues aspartate 280 to histidine 283 carry the DEAH box motif. Positions arginine 490–aspartate 644 constitute a Helicase C-terminal domain.

Belongs to the SNF2/RAD54 helicase family. RapA subfamily. As to quaternary structure, interacts with the RNAP. Has a higher affinity for the core RNAP than for the holoenzyme. Its ATPase activity is stimulated by binding to RNAP.

Transcription regulator that activates transcription by stimulating RNA polymerase (RNAP) recycling in case of stress conditions such as supercoiled DNA or high salt concentrations. Probably acts by releasing the RNAP, when it is trapped or immobilized on tightly supercoiled DNA. Does not activate transcription on linear DNA. Probably not involved in DNA repair. The polypeptide is RNA polymerase-associated protein RapA (Citrobacter koseri (strain ATCC BAA-895 / CDC 4225-83 / SGSC4696)).